We begin with the raw amino-acid sequence, 139 residues long: CLAVATA3/ESR (CLE)-related protein 1 (139 aa).

An N-terminal signal peptide occupies residues 1–22 (MPNIFKILLIVLLAVVSFRLSA). The required for secretion from the host cytoplasm to the host apoplasm stretch occupies residues 23-90 (STGDKKTAND…VPSHLTNRSM (68 aa)). N-linked (GlcNAc...) asparagine glycans are attached at residues Asn37 and Asn87. A disordered region spans residues 66–139 (AIGRSNAQGG…SPSGPDPHHH (74 aa)). Residues 100–125 (EKGAATRVEKMRAQLRELAEKMTDKD) are a coiled coil. The span at 106–128 (RVEKMRAQLRELAEKMTDKDPKR) shows a compositional bias: basic and acidic residues. The CLE motif lies at 128-139 (RLSPSGPDPHHH).

This sequence belongs to the CLV3/ESR signal peptide family. In terms of tissue distribution, highly expressed exclusively within the dorsal esophageal gland cell during syncytium formation in host plants (at protein level).

It localises to the secreted. The protein resides in the host cytoplasm. Its subcellular location is the host extracellular space. The protein localises to the extracellular space. It is found in the apoplast. Functionally, mimics host plant CLE extracellular signal peptides that regulate cell fate. May play a role in the differentiation or division of feeding cells (syncytia) induced in plant roots during infection. This chain is CLAVATA3/ESR (CLE)-related protein 1 (CLE1), found in Heterodera glycines (Soybean cyst nematode worm).